A 554-amino-acid chain; its full sequence is Hydroxylamine reductase (554 aa).

[2Fe-2S] cluster contacts are provided by cysteine 3, cysteine 6, cysteine 18, and cysteine 25. The hybrid [4Fe-2O-2S] cluster site is built by histidine 252, glutamate 276, cysteine 320, cysteine 408, cysteine 436, cysteine 461, glutamate 495, and lysine 497. Cysteine 408 is modified (cysteine persulfide).

The protein belongs to the HCP family. The cofactor is [2Fe-2S] cluster. It depends on hybrid [4Fe-2O-2S] cluster as a cofactor.

The protein localises to the cytoplasm. It carries out the reaction A + NH4(+) + H2O = hydroxylamine + AH2 + H(+). Its function is as follows. Catalyzes the reduction of hydroxylamine to form NH(3) and H(2)O. In Shewanella baltica (strain OS155 / ATCC BAA-1091), this protein is Hydroxylamine reductase.